A 130-amino-acid chain; its full sequence is Small ribosomal subunit protein uS9 (130 aa).

It belongs to the universal ribosomal protein uS9 family.

This is Small ribosomal subunit protein uS9 from Oceanobacillus iheyensis (strain DSM 14371 / CIP 107618 / JCM 11309 / KCTC 3954 / HTE831).